Consider the following 200-residue polypeptide: Protein OPI10 homolog (200 aa).

It belongs to the OPI10 family.

It localises to the cytoplasm. The protein resides in the nucleus envelope. This is Protein OPI10 homolog from Schizosaccharomyces pombe (strain 972 / ATCC 24843) (Fission yeast).